A 401-amino-acid chain; its full sequence is Restriction of telomere capping protein 4 (401 aa).

The residue at position 23 (S23) is a Phosphoserine. A compositionally biased stretch (basic and acidic residues) spans 35 to 48 (KHDIHDRESDDLSG). Residues 35–59 (KHDIHDRESDDLSGHDAFSPSKKRG) form a disordered region.

This sequence belongs to the RTC4 family.

It localises to the cytoplasm. The protein localises to the nucleus. May be involved in a process influencing telomere capping. This Saccharomyces cerevisiae (strain YJM789) (Baker's yeast) protein is Restriction of telomere capping protein 4 (RTC4).